Consider the following 318-residue polypeptide: Thymidylate synthase (318 aa).

DUMP-binding positions include arginine 25 and 180–181 (RR). The active-site Nucleophile is the cysteine 200. Residues 220–223 (RSGD), asparagine 231, and 261–263 (HIY) each bind dUMP. (6R)-5,10-methylene-5,6,7,8-tetrahydrofolate is bound at residue aspartate 223. Residue alanine 317 participates in (6R)-5,10-methylene-5,6,7,8-tetrahydrofolate binding.

The protein belongs to the thymidylate synthase family. Bacterial-type ThyA subfamily. As to quaternary structure, homodimer.

The protein resides in the cytoplasm. It carries out the reaction dUMP + (6R)-5,10-methylene-5,6,7,8-tetrahydrofolate = 7,8-dihydrofolate + dTMP. It functions in the pathway pyrimidine metabolism; dTTP biosynthesis. Catalyzes the reductive methylation of 2'-deoxyuridine-5'-monophosphate (dUMP) to 2'-deoxythymidine-5'-monophosphate (dTMP) while utilizing 5,10-methylenetetrahydrofolate (mTHF) as the methyl donor and reductant in the reaction, yielding dihydrofolate (DHF) as a by-product. This enzymatic reaction provides an intracellular de novo source of dTMP, an essential precursor for DNA biosynthesis. This Bacillus cereus (strain ZK / E33L) protein is Thymidylate synthase.